The primary structure comprises 265 residues: Transcriptional activator AggR (265 aa).

One can recognise an HTH araC/xylS-type domain in the interval 164 to 261; sequence DKVRNTIEKD…GITPKQFLTY (98 aa). 2 DNA-binding regions (H-T-H motif) span residues 181–202 and 228–251; these read AIIADEFNVSEITIRKRLESEY and ISQISNMIGFSSTSYFIRLFVKHF.

Homodimer.

Transcriptional activator of aggregative adherence fimbria I expression in enteroaggregative E.coli. This Escherichia coli protein is Transcriptional activator AggR (aggR).